The primary structure comprises 320 residues: tRNA dimethylallyltransferase (320 aa).

10–17 (GPTASGKT) lines the ATP pocket. Position 12–17 (12–17 (TASGKT)) interacts with substrate. Interaction with substrate tRNA stretches follow at residues 35 to 38 (DSAL), 159 to 163 (QRIQR), and 241 to 246 (RCVGYR).

Belongs to the IPP transferase family. As to quaternary structure, monomer. Mg(2+) is required as a cofactor.

It catalyses the reaction adenosine(37) in tRNA + dimethylallyl diphosphate = N(6)-dimethylallyladenosine(37) in tRNA + diphosphate. Its function is as follows. Catalyzes the transfer of a dimethylallyl group onto the adenine at position 37 in tRNAs that read codons beginning with uridine, leading to the formation of N6-(dimethylallyl)adenosine (i(6)A). This Aromatoleum aromaticum (strain DSM 19018 / LMG 30748 / EbN1) (Azoarcus sp. (strain EbN1)) protein is tRNA dimethylallyltransferase.